We begin with the raw amino-acid sequence, 367 residues long: Sulfate/thiosulfate import ATP-binding protein CysA 2 (367 aa).

The 235-residue stretch at 3–237 folds into the ABC transporter domain; that stretch reads VRVQNIRKEF…PVSPFVYGFI (235 aa). An ATP-binding site is contributed by 35 to 42; sequence GPSGSGKT.

The protein belongs to the ABC transporter superfamily. Sulfate/tungstate importer (TC 3.A.1.6) family. The complex is composed of two ATP-binding proteins (CysA), two transmembrane proteins (CysT and CysW) and a solute-binding protein (CysP).

The protein localises to the cell inner membrane. The enzyme catalyses sulfate(out) + ATP + H2O = sulfate(in) + ADP + phosphate + H(+). The catalysed reaction is thiosulfate(out) + ATP + H2O = thiosulfate(in) + ADP + phosphate + H(+). Its function is as follows. Part of the ABC transporter complex CysAWTP involved in sulfate/thiosulfate import. Responsible for energy coupling to the transport system. The polypeptide is Sulfate/thiosulfate import ATP-binding protein CysA 2 (Rhizobium meliloti (strain 1021) (Ensifer meliloti)).